A 157-amino-acid chain; its full sequence is uncharacterized protein (157 aa).

To E.coli YcjD and H.influenzae HI_0925.

This is an uncharacterized protein from Haemophilus influenzae (strain ATCC 51907 / DSM 11121 / KW20 / Rd).